The primary structure comprises 490 residues: Aspartyl aminopeptidase 4 (490 aa).

Zn(2+) is bound at residue His97. Position 173 (His173) interacts with substrate. Asp273, Glu308, Glu309, and Asp362 together coordinate Zn(2+). Glu308 serves as a coordination point for substrate. Substrate is bound by residues Asp362, His365, Lys390, and Tyr397. Position 456 (His456) interacts with Zn(2+).

This sequence belongs to the peptidase M18 family. As to quaternary structure, tetrahedron-shaped homododecamer built from six homodimers. It depends on Zn(2+) as a cofactor.

Its subcellular location is the cytoplasm. It localises to the vacuole lumen. It catalyses the reaction Release of an N-terminal aspartate or glutamate from a peptide, with a preference for aspartate.. With respect to regulation, the metalloproteases inhibitors EDTA and 1.10-phenanthroline both inhibit the activity, whereas bestatin, an inhibitor of most aminopeptidases, does not affect enzyme activity. In terms of biological role, aspartyl aminopeptidase that contributes to peptide degradation both in the cytosol and the vacuole. Cells may respond to environmental conditions by changing the distributions of the cytosolic enzyme to the vacuole when cells need more active vacuolar degradation. The polypeptide is Aspartyl aminopeptidase 4 (APE4) (Saccharomyces cerevisiae (strain ATCC 204508 / S288c) (Baker's yeast)).